The sequence spans 474 residues: uncharacterized protein (474 aa).

The N-terminal stretch at 1-23 (MLRRYLTLSFSSLLLLALLFLTG) is a signal peptide. A lipid anchor (N-palmitoyl cysteine) is attached at cysteine 24. The S-diacylglycerol cysteine moiety is linked to residue cysteine 24.

It belongs to the MG067/MG068/MG395 family.

The protein localises to the cell membrane. This is an uncharacterized protein from Mycoplasma genitalium (strain ATCC 33530 / DSM 19775 / NCTC 10195 / G37) (Mycoplasmoides genitalium).